The sequence spans 218 residues: Molybdenum cofactor guanylyltransferase (218 aa).

GTP contacts are provided by residues 16–18, lysine 28, asparagine 56, aspartate 74, and aspartate 109; that span reads LAG. Mg(2+) is bound at residue aspartate 109.

The protein belongs to the MobA family. Monomer. The cofactor is Mg(2+).

It localises to the cytoplasm. It carries out the reaction Mo-molybdopterin + GTP + H(+) = Mo-molybdopterin guanine dinucleotide + diphosphate. Functionally, transfers a GMP moiety from GTP to Mo-molybdopterin (Mo-MPT) cofactor (Moco or molybdenum cofactor) to form Mo-molybdopterin guanine dinucleotide (Mo-MGD) cofactor. In Rhizobium meliloti (strain 1021) (Ensifer meliloti), this protein is Molybdenum cofactor guanylyltransferase.